Here is a 288-residue protein sequence, read N- to C-terminus: ATP synthase gamma chain (288 aa).

This sequence belongs to the ATPase gamma chain family. F-type ATPases have 2 components, CF(1) - the catalytic core - and CF(0) - the membrane proton channel. CF(1) has five subunits: alpha(3), beta(3), gamma(1), delta(1), epsilon(1). CF(0) has three main subunits: a, b and c.

Its subcellular location is the cell membrane. In terms of biological role, produces ATP from ADP in the presence of a proton gradient across the membrane. The gamma chain is believed to be important in regulating ATPase activity and the flow of protons through the CF(0) complex. This chain is ATP synthase gamma chain, found in Symbiobacterium thermophilum (strain DSM 24528 / JCM 14929 / IAM 14863 / T).